A 330-amino-acid polypeptide reads, in one-letter code: 5'-AMP-activated protein kinase subunit gamma-1 (330 aa).

The disordered stretch occupies residues 1-24; sequence MEAVPSSDSYPAVENEHLQETPES. 3 consecutive CBS domains span residues 43-103, 125-187, and 198-260; these read PTSS…KSAL, SFKP…PKPE, and IGTY…NLDV. ADP-binding positions include arginine 70, 85–90, valine 130, 151–152, and lysine 170; these read MLTITD and HR. AMP contacts are provided by residues arginine 70, 85–90, valine 130, histidine 151, 151–152, lysine 170, threonine 200, alanine 205, 226–227, and 242–245; these read MLTITD, HR, SA, and SKFD. Residues arginine 70, 85-90, valine 130, 151-152, arginine 152, and lysine 170 contribute to the ATP site; these read MLTITD and HR. The AMPK pseudosubstrate signature appears at 138 to 159; that stretch reads LFDAVSSLIRNKIHRLPVIDPE. 242-245 is an ADP binding site; the sequence is SKFD. 242-245 contributes to the ATP binding site; the sequence is SKFD. Phosphoserine; by ULK1 is present on serine 261. The residue at position 263 (threonine 263) is a Phosphothreonine; by ULK1. Arginine 269 serves as a coordination point for ADP. Arginine 269 provides a ligand contact to AMP. An ATP-binding site is contributed by arginine 269. Serine 270 is subject to Phosphoserine; by ULK1. The 58-residue stretch at 272–329 folds into the CBS 4 domain; the sequence is YFEGVLKCYLHETLETIINRLVEAEVHRLVVVDENDVVKGIVSLSDILQALVLTGGEK. ADP-binding positions include leucine 277 and 298–299; that span reads HR. AMP is bound by residues leucine 277, histidine 298, 298 to 299, and 314 to 317; these read HR and SLSD. ATP contacts are provided by residues leucine 277 and 298–299; that span reads HR.

Belongs to the 5'-AMP-activated protein kinase gamma subunit family. As to quaternary structure, AMPK is a heterotrimer of an alpha catalytic subunit (PRKAA1 or PRKAA2), a beta (PRKAB1 or PRKAB2) and a gamma non-catalytic subunits (PRKAG1, PRKAG2 or PRKAG3). Interacts with FNIP1 and FNIP2. In terms of processing, phosphorylated by ULK1 and ULK2; leading to negatively regulate AMPK activity and suggesting the existence of a regulatory feedback loop between ULK1, ULK2 and AMPK. Post-translationally, glycosylated; O-GlcNAcylated by OGT, promoting the AMP-activated protein kinase (AMPK) activity.

Its function is as follows. AMP/ATP-binding subunit of AMP-activated protein kinase (AMPK), an energy sensor protein kinase that plays a key role in regulating cellular energy metabolism. In response to reduction of intracellular ATP levels, AMPK activates energy-producing pathways and inhibits energy-consuming processes: inhibits protein, carbohydrate and lipid biosynthesis, as well as cell growth and proliferation. AMPK acts via direct phosphorylation of metabolic enzymes, and by longer-term effects via phosphorylation of transcription regulators. Also acts as a regulator of cellular polarity by remodeling the actin cytoskeleton; probably by indirectly activating myosin. Gamma non-catalytic subunit mediates binding to AMP, ADP and ATP, leading to activate or inhibit AMPK: AMP-binding results in allosteric activation of alpha catalytic subunit (PRKAA1 or PRKAA2) both by inducing phosphorylation and preventing dephosphorylation of catalytic subunits. ADP also stimulates phosphorylation, without stimulating already phosphorylated catalytic subunit. ATP promotes dephosphorylation of catalytic subunit, rendering the AMPK enzyme inactive. This Bos taurus (Bovine) protein is 5'-AMP-activated protein kinase subunit gamma-1 (PRKAG1).